The chain runs to 184 residues: UPF0669 protein C6orf120 homolog (184 aa).

The signal sequence occupies residues 1 to 23; sequence MAAPWTGALLLLLASQAVSSAQA. An N-linked (GlcNAc...) asparagine glycan is attached at N47.

Belongs to the UPF0669 family.

Its subcellular location is the secreted. In terms of biological role, may be involved in induction of apoptosis in CD4(+) T-cells, but not CD8(+) T-cells or hepatocytes. The sequence is that of UPF0669 protein C6orf120 homolog from Bos taurus (Bovine).